A 140-amino-acid polypeptide reads, in one-letter code: L-fucose mutarotase (140 aa).

H22 functions as the Proton donor in the catalytic mechanism. Residues D30, R107, and 129 to 131 (YGN) contribute to the substrate site.

Belongs to the RbsD / FucU family. FucU mutarotase subfamily. As to quaternary structure, homodecamer.

The protein resides in the cytoplasm. The enzyme catalyses alpha-L-fucose = beta-L-fucose. It participates in carbohydrate metabolism; L-fucose metabolism. Functionally, involved in the anomeric conversion of L-fucose. In Klebsiella pneumoniae (strain 342), this protein is L-fucose mutarotase.